We begin with the raw amino-acid sequence, 64 residues long: uncharacterized protein (64 aa).

Residues 15-37 (VVVPRFVRFIVYVVLFTVAVQRV) form a helical membrane-spanning segment.

It belongs to the HHV-5 US34A protein family.

The protein localises to the host membrane. This is an uncharacterized protein from Homo sapiens (Human).